The sequence spans 53 residues: ATP synthase protein 8 (53 aa).

A helical membrane pass occupies residues I10 to L30.

Belongs to the ATPase protein 8 family. As to quaternary structure, F-type ATPases have 2 components, CF(1) - the catalytic core - and CF(0) - the membrane proton channel.

It localises to the mitochondrion membrane. Its function is as follows. Mitochondrial membrane ATP synthase (F(1)F(0) ATP synthase or Complex V) produces ATP from ADP in the presence of a proton gradient across the membrane which is generated by electron transport complexes of the respiratory chain. F-type ATPases consist of two structural domains, F(1) - containing the extramembraneous catalytic core and F(0) - containing the membrane proton channel, linked together by a central stalk and a peripheral stalk. During catalysis, ATP synthesis in the catalytic domain of F(1) is coupled via a rotary mechanism of the central stalk subunits to proton translocation. Part of the complex F(0) domain. Minor subunit located with subunit a in the membrane. This chain is ATP synthase protein 8 (MT-ATP8), found in Artemia franciscana (Brine shrimp).